Here is a 464-residue protein sequence, read N- to C-terminus: Cysteine--tRNA ligase 1 (464 aa).

Cys28 contributes to the Zn(2+) binding site. Residues 30–40 (VTIYDLCHIGH) carry the 'HIGH' region motif. Zn(2+) is bound by residues Cys209, His234, and Glu238. The short motif at 266 to 270 (KMSKS) is the 'KMSKS' region element. ATP is bound at residue Lys269.

This sequence belongs to the class-I aminoacyl-tRNA synthetase family. Monomer. Zn(2+) is required as a cofactor.

The protein resides in the cytoplasm. It carries out the reaction tRNA(Cys) + L-cysteine + ATP = L-cysteinyl-tRNA(Cys) + AMP + diphosphate. The sequence is that of Cysteine--tRNA ligase 1 from Photobacterium profundum (strain SS9).